The sequence spans 178 residues: Caveolin-1 (178 aa).

Position 2 is an N-acetylserine (Ser-2). Ser-2 carries the post-translational modification Phosphoserine. The interval 2–94 is required for homooligomerization; sequence SGGKYVDSEG…WKASFTTFTV (93 aa). Over 2 to 104 the chain is Cytoplasmic; the sequence is SGGKYVDSEG…TKYWFYRLLS (103 aa). Lys-5 bears the N6-acetyllysine; alternate mark. Lys-5 participates in a covalent cross-link: Glycyl lysine isopeptide (Lys-Gly) (interchain with G-Cter in ubiquitin); alternate. Residue Tyr-6 is modified to Phosphotyrosine. A Phosphoserine modification is found at Ser-9. Tyr-14 carries the post-translational modification Phosphotyrosine; by ABL1. Tyr-25 bears the Phosphotyrosine mark. Residues Lys-26 and Lys-30 each participate in a glycyl lysine isopeptide (Lys-Gly) (interchain with G-Cter in ubiquitin) cross-link. Residue Ser-37 is modified to Phosphoserine. Residues Lys-39, Lys-47, and Lys-57 each participate in a glycyl lysine isopeptide (Lys-Gly) (interchain with G-Cter in ubiquitin) cross-link. The segment at 82–94 is interaction with CAVIN3; the sequence is DGIWKASFTTFTV. An intramembrane region (helical) is located at residues 105–125; sequence ALFGIPMALIWGIYFAILSFL. Residues 126–178 are Cytoplasmic-facing; that stretch reads HIWAVVPCIKSFLIEIQCISRVYSIYVHTFCDPFFEAVGKIFSNIRINMQKET. The interacts with SPRY1, SPRY2, SPRY3 and SPRY4 stretch occupies residues 131–142; sequence VPCIKSFLIEIQ. Residues Cys-133, Cys-143, and Cys-156 are each lipidated (S-palmitoyl cysteine). The tract at residues 149–160 is interacts with SPRY1, SPRY2, and SPRY4; the sequence is SIYVHTFCDPFF. The tract at residues 167–178 is interacts with SPRY1, SPRY2, SPRY3 and SPRY4; sequence FSNIRINMQKET.

It belongs to the caveolin family. In terms of assembly, homooligomer. Interacts with BMX, BTK, GLIPR2, NOSTRIN, SNAP25 and STX1A. Interacts with PACSIN2; this interaction induces membrane tubulation. Interacts (via the N-terminus) with DPP4; the interaction is direct. Interacts with SLC7A9. Interacts with CTNNB1, CDH1 and JUP. Interacts with TGFBR1. Interacts with CAVIN3 (via leucine-zipper domain) in a cholesterol-sensitive manner. Interacts with CAVIN1. Interacts with EHD2 in a cholesterol-dependent manner. Forms a ternary complex with UBXN6 and VCP; mediates CAV1 targeting to lysosomes for degradation. Interacts with ABCG1; this interaction regulates ABCG1-mediated cholesterol efflux. Interacts with NEU3; this interaction enhances NEU3 sialidase activity within caveola. Interacts (via C-terminus) with SPRY1, SPRY2 (via C-terminus), SPRY3, and SPRY4. Interacts with IGFBP5; this interaction allows trafficking of IGFBP5 from the plasma membrane to the nucleus. Phosphorylation of isoform Beta on serine residues is constitutive. Phosphorylated at Tyr-14 by ABL1 in response to oxidative stress. Post-translationally, ubiquitinated. Undergo monoubiquitination and multi- and/or polyubiquitination. Monoubiquitination of N-terminal lysines promotes integration in a ternary complex with UBXN6 and VCP which promotes oligomeric CAV1 targeting to lysosomes for degradation. Ubiquitinated by ZNRF1; leading to degradation and modulation of the TLR4-mediated immune response.

It localises to the golgi apparatus membrane. Its subcellular location is the cell membrane. It is found in the membrane. The protein resides in the caveola. The protein localises to the membrane raft. It localises to the golgi apparatus. Its subcellular location is the trans-Golgi network. Its function is as follows. May act as a scaffolding protein within caveolar membranes. Forms a stable heterooligomeric complex with CAV2 that targets to lipid rafts and drives caveolae formation. Mediates the recruitment of CAVIN proteins (CAVIN1/2/3/4) to the caveolae. Interacts directly with G-protein alpha subunits and can functionally regulate their activity. Involved in the costimulatory signal essential for T-cell receptor (TCR)-mediated T-cell activation. Its binding to DPP4 induces T-cell proliferation and NF-kappa-B activation in a T-cell receptor/CD3-dependent manner. Recruits CTNNB1 to caveolar membranes and may regulate CTNNB1-mediated signaling through the Wnt pathway. Negatively regulates TGFB1-mediated activation of SMAD2/3 by mediating the internalization of TGFBR1 from membrane rafts leading to its subsequent degradation. Binds 20(S)-hydroxycholesterol (20(S)-OHC). The protein is Caveolin-1 (CAV1) of Canis lupus familiaris (Dog).